Reading from the N-terminus, the 79-residue chain is Sec-independent protein translocase protein TatA (79 aa).

Residues 1 to 21 (MGGISIWQLLIIALIVILLFG) form a helical membrane-spanning segment. Positions 42-79 (AMTSETSEEEKKALEDSQTAQTSQQAEKKPESKDKEQA) are disordered. A compositionally biased stretch (polar residues) spans 57-66 (DSQTAQTSQQ). Residues 67-79 (AEKKPESKDKEQA) are compositionally biased toward basic and acidic residues.

This sequence belongs to the TatA/E family. The Tat system comprises two distinct complexes: a TatABC complex, containing multiple copies of TatA, TatB and TatC subunits, and a separate TatA complex, containing only TatA subunits. Substrates initially bind to the TatABC complex, which probably triggers association of the separate TatA complex to form the active translocon.

The protein resides in the cell inner membrane. Functionally, part of the twin-arginine translocation (Tat) system that transports large folded proteins containing a characteristic twin-arginine motif in their signal peptide across membranes. TatA could form the protein-conducting channel of the Tat system. The chain is Sec-independent protein translocase protein TatA from Shewanella denitrificans (strain OS217 / ATCC BAA-1090 / DSM 15013).